Reading from the N-terminus, the 77-residue chain is Large ribosomal subunit protein bL28 (77 aa).

It belongs to the bacterial ribosomal protein bL28 family.

This chain is Large ribosomal subunit protein bL28, found in Polaromonas sp. (strain JS666 / ATCC BAA-500).